A 367-amino-acid chain; its full sequence is Auxin efflux carrier component 8 (367 aa).

Residues 1–6 (MISWLD) are Extracellular-facing. A helical membrane pass occupies residues 7–27 (IYHVVSATVPLYVSMTLGFLS). Residues 28–38 (ARHLKLFSPEQ) lie on the Cytoplasmic side of the membrane. The chain crosses the membrane as a helical span at residues 39–59 (CAGINKFVAKFSIPLLSFQII). Ile51 serves as a coordination point for (indol-3-yl)acetate. Residues 60–69 (SENNPFKMSP) lie on the Extracellular side of the membrane. Residues 70–90 (KLILSDILQKFLVVVVLAMVL) traverse the membrane as a helical segment. Topologically, residues 91 to 105 (RFWHPTGGRGGKLGW) are cytoplasmic. The chain crosses the membrane as a helical span at residues 106–126 (VITGLSISVLPNTLILGMPIL). The (indol-3-yl)acetate site is built by Asn117 and Leu119. Residues 127–136 (SAIYGDEAAS) are Extracellular-facing. A helical membrane pass occupies residues 137–157 (ILEQIVVLQSLIWYTILLFLF). Tyr150 is a (indol-3-yl)acetate binding site. Residues 158-227 (ELNAARALPS…LIINPNTYAT (70 aa)) are Cytoplasmic-facing. The segment at 168–194 (SGASLEHTGNDQEEANIEDEPKEEEDE) is disordered. A compositionally biased stretch (acidic residues) spans 178 to 194 (DQEEANIEDEPKEEEDE). A helical membrane pass occupies residues 228–248 (LIGIIWATLHFRLGWNLPEMI). At 249–251 (DKS) the chain is on the extracellular side. The chain crosses the membrane as a helical span at residues 252 to 272 (IHLLSDGGLGMAMFSLGLFMA). The Cytoplasmic portion of the chain corresponds to 273-288 (SQSSIIACGTKMAIIT). The helical transmembrane segment at 289-309 (MLLKFVLGPALMIASAYCIRL) threads the bilayer. Residues 310–312 (KST) are Extracellular-facing. Residues 313–333 (LFKVAILQAALPQGVVPFVFA) traverse the membrane as a helical segment. (indol-3-yl)acetate contacts are provided by Val327 and Val328. Topologically, residues 334–344 (KEYNLHPEIIS) are cytoplasmic. A helical membrane pass occupies residues 345-365 (TGVIFGMLIALPTTLAYYFLL). The Extracellular portion of the chain corresponds to 366–367 (DL).

This sequence belongs to the auxin efflux carrier (TC 2.A.69.1) family. Homodimer. Expressed in veins of mature leaves. Strongly expressed in pollen.

The protein resides in the endoplasmic reticulum membrane. It localises to the cell membrane. With respect to regulation, auxin efflux carrier activity is competitively inhibited by naptalamate (N-1-naphthylphthalamic acid, NPA). In terms of biological role, acts as a component of the auxin efflux carrier. Component of the intracellular auxin-transport pathway in the male gametophyte. Involved in the regulation of auxin homeostasis in pollen. Involved in the efflux of auxin from the endoplasmic reticulum into the cytoplasm. Binds auxins including indole-3-acetic acid (IAA), naphthaleneacetic acid (NAA) and the herbicide 2,4-dichlorophenoxyacetic acid (2,4-D), but barely indole-3-butyric acid (IBA) and 2-phenylacetic acid (PAA). PIN5 and PIN8 may have an antagonistic/compensatory activity. Involved in the control of vein patterning. Redundantly with PIN6, inhibits the vein-formation-promoting functions of PIN5. PIN5, PIN6, and PIN8 control vein network geometry, but they are expressed in mutually exclusive domains of leaf vascular cells. This Arabidopsis thaliana (Mouse-ear cress) protein is Auxin efflux carrier component 8.